The primary structure comprises 490 residues: MERVGCTLTTTYAHPRPTPTNFLPAISTMASSYRDRFPHSNLTHSLSLPWRPSTYYKVASNSPSVAPYCTRSQRVSENTMLPFVSNRTTFFTRYTPDDWYRSNLTNYQESNTSRHNSEKLRVDTSRLIQDKYQQTRKTQADTTQNLGERVNDIGFWKSEIIHELDEMIGETNALTDVKKRLERALMETEAPLQVARECLFHREKRMGIDLVHDEVEAQLLTEVDTILCCQERMKLHLDKAIAQLAANRASQHELEKDLSDKQTAYRIDDKCHHLRNTSDGVGYFRGVERVDATVSVPESWAKFTDDNILRSQSERAASAKLRDDIENLLVVTANEMWNQFNKVNLSFTNRIAETADAKNKIQTHLAKTLQEIFQTEMTIESIKKAIKDKTAFLKVAQTRLDERTRRPNIELCRDMAQLRLVNEVHEVDDTIQTLQQRLRDAEDTLQSLVHIKATLEYDLAVKANSLYIDQEKCMSMRKSYPNTLRLVGFC.

3 O-linked (GalNAc...) threonine glycosylation sites follow: T7, T9, and T10. N-linked (GlcNAc...) asparagine glycans are attached at residues N41, N86, N103, N111, N276, and N344. The stretch at 424–451 (VHEVDDTIQTLQQRLRDAEDTLQSLVHI) forms a coiled coil.

The protein belongs to the tektin family. Microtubule inner protein component of sperm flagellar doublet microtubules. Interacts with TEKT1, TEKT2, TEKT4 and TEKT5. Interacts with CCDC38. In terms of processing, N- and O-glycosylated. Post-translationally, may be proteolytically processed during the epididymal transit of spermatozoa. Ubiquitinated, leading to its degradation. Deubiquitinated by USP16, promoting its stability. Expressed in spermatozoa. Expressed in airway epithelial cells.

It is found in the cytoplasm. It localises to the cytoskeleton. The protein resides in the cilium axoneme. Its subcellular location is the flagellum axoneme. The protein localises to the cytoplasmic vesicle. It is found in the secretory vesicle. It localises to the acrosome outer membrane. Microtubule inner protein (MIP) part of the dynein-decorated doublet microtubules (DMTs) in cilia and flagellar axoneme. Forms filamentous polymers in the walls of ciliary and flagellar microtubules. Required for normal sperm mobility. The polypeptide is Tektin-3 (TEKT3) (Homo sapiens (Human)).